Consider the following 505-residue polypeptide: Prenylcysteine oxidase 1 (505 aa).

Positions 1 to 28 (MGRFAAALVGSLFWLGLLLCGLGSLASA) are cleaved as a signal peptide. N-linked (GlcNAc...) asparagine glycosylation is found at asparagine 196, asparagine 323, and asparagine 353.

This sequence belongs to the prenylcysteine oxidase family. Requires FAD as cofactor. As to expression, highly expressed in the liver, kidney, heart and brain.

Its subcellular location is the lysosome. The catalysed reaction is an S-polyprenyl-L-cysteine + O2 + H2O = a polyprenal + L-cysteine + H2O2. It catalyses the reaction S-(2E,6E)-farnesyl-L-cysteine + O2 + H2O = (2E,6E)-farnesal + L-cysteine + H2O2. It carries out the reaction [(2E,6E,10E)-geranylgeranyl]-L-cysteine + O2 + H2O = (2E,6E,10E)-geranylgeranial + L-cysteine + H2O2. In terms of biological role, prenylcysteine oxidase that cleaves the thioether bond of prenyl-L-cysteines, such as farnesylcysteine and geranylgeranylcysteine. Only active against free prenylcysteines and not prenylcysteine residues within prenylated proteins or peptides. Involved in the final step in the degradation of prenylated proteins, by degrading prenylcysteines after the protein has been degraded. The sequence is that of Prenylcysteine oxidase 1 from Mus musculus (Mouse).